We begin with the raw amino-acid sequence, 399 residues long: MTLSTSQSLLEKTALETYVPPARPSLIGLSRAELAEALGGIGVAASQRKMRAQQLWHWMYFRGVQEFAEMTSISKEMRSQLAEHFTVARPEVVAEQISNDGTRKWLLRLPSGVSGEKAHEVECVYIPETDRGTLCVSSQVGCTLNCSFCHTGTQKLVRNLTAGEIVGQVMVARDRLNDWADRETPNGNRLVTNVVMMGMGEPLYNFDAVRDALLIVSDNEGIGISRRRVTLSTSGVVPNIVRAGEEIGVMLAISLHAVRDELRDELVPLNRKYPLAELLQACRDYPGASNARRITFEYVMLKDVNDSLDDAKLLVKLLSGIPAKINLIPFNPWPGTAYKCSDWDQIEKFSEYIFNAGYSSPVRTPRGRDILAACGQLKSETEKLTAREREALRAMAMTD.

Glu122 (proton acceptor) is an active-site residue. The 244-residue stretch at 128 to 371 folds into the Radical SAM core domain; that stretch reads ETDRGTLCVS…VRTPRGRDIL (244 aa). Residues Cys135 and Cys374 are joined by a disulfide bond. The [4Fe-4S] cluster site is built by Cys142, Cys146, and Cys149. Residues 200–201, Ser232, 254–256, and Asn331 contribute to the S-adenosyl-L-methionine site; these read GE and SLH. The active-site S-methylcysteine intermediate is Cys374.

Belongs to the radical SAM superfamily. RlmN family. It depends on [4Fe-4S] cluster as a cofactor.

It is found in the cytoplasm. The catalysed reaction is adenosine(2503) in 23S rRNA + 2 reduced [2Fe-2S]-[ferredoxin] + 2 S-adenosyl-L-methionine = 2-methyladenosine(2503) in 23S rRNA + 5'-deoxyadenosine + L-methionine + 2 oxidized [2Fe-2S]-[ferredoxin] + S-adenosyl-L-homocysteine. It catalyses the reaction adenosine(37) in tRNA + 2 reduced [2Fe-2S]-[ferredoxin] + 2 S-adenosyl-L-methionine = 2-methyladenosine(37) in tRNA + 5'-deoxyadenosine + L-methionine + 2 oxidized [2Fe-2S]-[ferredoxin] + S-adenosyl-L-homocysteine. Functionally, specifically methylates position 2 of adenine 2503 in 23S rRNA and position 2 of adenine 37 in tRNAs. m2A2503 modification seems to play a crucial role in the proofreading step occurring at the peptidyl transferase center and thus would serve to optimize ribosomal fidelity. The chain is Dual-specificity RNA methyltransferase RlmN from Rhodopseudomonas palustris (strain BisB18).